We begin with the raw amino-acid sequence, 293 residues long: tRNA pseudouridine synthase B (293 aa).

Asp40 (nucleophile) is an active-site residue.

Belongs to the pseudouridine synthase TruB family. Type 1 subfamily.

The catalysed reaction is uridine(55) in tRNA = pseudouridine(55) in tRNA. Functionally, responsible for synthesis of pseudouridine from uracil-55 in the psi GC loop of transfer RNAs. In Mycolicibacterium paratuberculosis (strain ATCC BAA-968 / K-10) (Mycobacterium paratuberculosis), this protein is tRNA pseudouridine synthase B.